Here is a 183-residue protein sequence, read N- to C-terminus: Ribosome maturation factor RimP (183 aa).

This sequence belongs to the RimP family.

The protein resides in the cytoplasm. Functionally, required for maturation of 30S ribosomal subunits. In Leptothrix cholodnii (strain ATCC 51168 / LMG 8142 / SP-6) (Leptothrix discophora (strain SP-6)), this protein is Ribosome maturation factor RimP.